The chain runs to 277 residues: Prohibitin-3, mitochondrial (277 aa).

Residue Gly2 is modified to N-acetylglycine. At 2 to 6 (GSQQA) the chain is on the mitochondrial matrix side. Residues 7–28 (AVSFLSNLAKAAFGLGTAATVL) form a helical; Signal-anchor for type II membrane protein membrane-spanning segment. The Mitochondrial intermembrane segment spans residues 29-277 (NTSLFTVDGG…GQSMLFALNR (249 aa)).

This sequence belongs to the prohibitin family. Component of a prohibitin multimeric complex in mitochondrial membranes. In terms of tissue distribution, mostly expressed in proliferative tissues, including vasculature, shoot and root apical tissues. Expressed in roots, stems, leaves and flowers (at protein level).

The protein resides in the cell membrane. It localises to the mitochondrion inner membrane. Its subcellular location is the nucleus. It is found in the cytoplasm. Functionally, prohibitin probably acts as a holdase/unfoldase for the stabilization of newly synthesized mitochondrial proteins. Necessary for mitochondrial and cell metabolism and biogenesis. Required to regulate the ethylene-mediated signaling; involved in growth maintenance in the presence of ethylene. Functions in nitric oxide (NO)-mediated responses and in hydrogen peroxide-induced NO accumulation. The chain is Prohibitin-3, mitochondrial (PHB3) from Arabidopsis thaliana (Mouse-ear cress).